A 483-amino-acid polypeptide reads, in one-letter code: Cysteine--tRNA ligase (483 aa).

C27 lines the Zn(2+) pocket. Residues 29–39 carry the 'HIGH' region motif; it reads ITAYDYCHIGH. Zn(2+) is bound by residues C208, H231, and E235. Residues 263-267 carry the 'KMSKS' region motif; that stretch reads KMSKS. K266 contacts ATP.

This sequence belongs to the class-I aminoacyl-tRNA synthetase family. As to quaternary structure, monomer. Zn(2+) is required as a cofactor.

Its subcellular location is the cytoplasm. The catalysed reaction is tRNA(Cys) + L-cysteine + ATP = L-cysteinyl-tRNA(Cys) + AMP + diphosphate. This is Cysteine--tRNA ligase from Desulfovibrio desulfuricans (strain ATCC 27774 / DSM 6949 / MB).